The sequence spans 981 residues: Ubiquitin carboxyl-terminal hydrolase 37 (981 aa).

The KEN box 1 signature appears at 32-34; it reads KEN. Short sequence motifs (D-box) lie at residues 71–79 and 96–105; these read RLMLTLQDN and RLFLDAVHQN. The segment at 111-306 is disordered; that stretch reads MKPSQGSGSF…TPSAKRSLGF (196 aa). At Ser114 the chain carries Phosphoserine. Residues 135–148 show a composition bias toward polar residues; the sequence is RQLSYSDNQVSSKR. Residues 149–159 are compositionally biased toward basic and acidic residues; the sequence is GSLETKDDTPF. Positions 160–168 match the D-box 3 motif; it reads RKVLGNPSR. A Phosphoserine modification is found at Ser170. Positions 183-200 are enriched in low complexity; sequence RTIPSLTSTSTPLRSGLL. The residue at position 212 (Ser212) is a Phosphoserine. The KEN box 2 signature appears at 223-225; the sequence is KEN. The segment covering 245–259 has biased composition (basic and acidic residues); that stretch reads SREKQLSLKQSEENR. The span at 283–300 shows a compositional bias: polar residues; sequence PGSTNLDRTNISSQTPSA. Residues 343–953 form the USP domain; it reads QGFSNLGNTC…SGYIFFYMHK (611 aa). Cys352 (nucleophile) is an active-site residue. Ser630 carries the phosphoserine; by CDK2 modification. Phosphoserine is present on residues Ser652 and Ser654. Disordered regions lie at residues 670 to 705 and 721 to 797; these read EMSGSEQQQEDLEKDSKSCRIEPDKSELENSGFDGM and EASP…GEVD. Basic and acidic residues-rich tracts occupy residues 683–697 and 721–734; these read KDSKSCRIEPDKSEL and EASPSLSHEDDDKP. The UIM 1 domain maps to 706–725; sequence SEEELLAAVLEISKREASPS. Residue Ser772 is modified to Phosphoserine. A compositionally biased stretch (basic and acidic residues) spans 776-788; it reads ITKDCDENKENKT. Positions 784 to 786 match the KEN box 3 motif; sequence KEN. 2 UIM domains span residues 808-827 and 830-849; these read REEQELQQALAQSLQEQEAW and KEDDDLKRATELSLQEFNNS. His908 functions as the Proton acceptor in the catalytic mechanism.

Belongs to the peptidase C19 family. As to quaternary structure, interacts with FZR1/CDH1. Interacts with CDT1. Polyubiquitinated via 'Lys-11'-linked ubiquitin by the APC(CDH1) complex during late mitosis, leading to its degradation. Able to mediate auto-deubiquitination. In terms of processing, phosphorylated at Ser-630 by CDK2 during G1/S phase but not during mitosis; phosphorylation at Ser-630 is required for deubiquitinase activity. Also polyubiquitinated during early G1 phase, without leading to degradation. Phosphorylated at Ser-114 by ATM following DNA damage, which in turn increases its deubiquitination activity towards BLM.

It is found in the nucleus. The protein localises to the chromosome. It catalyses the reaction Thiol-dependent hydrolysis of ester, thioester, amide, peptide and isopeptide bonds formed by the C-terminal Gly of ubiquitin (a 76-residue protein attached to proteins as an intracellular targeting signal).. Deubiquitinase that plays a role in different processes including cell cycle regulation, DNA replication or DNA damage response. Antagonizes the anaphase-promoting complex (APC/C) during G1/S transition by mediating deubiquitination of cyclin-A (CCNA1 and CCNA2), thereby promoting S phase entry. Specifically mediates deubiquitination of 'Lys-11'-linked polyubiquitin chains, a specific ubiquitin-linkage type mediated by the APC/C complex. Phosphorylation at Ser-628 during G1/S phase maximizes the deubiquitinase activity, leading to prevent degradation of cyclin-A (CCNA1 and CCNA2). Plays an important role in the regulation of DNA replication by stabilizing the licensing factor CDT1. Also plays an essential role beyond S-phase entry to promote the efficiency and fidelity of replication by deubiquitinating checkpoint kinase 1/CHK1, promoting its stability. Sustains the DNA damage response (DDR) by deubiquitinating and stabilizing the ATP-dependent DNA helicase BLM. Mechanistically, DNA double-strand breaks (DSB) promotes ATM-mediated phosphorylation of USP37 and enhances the binding between USP37 and BLM. Promotes cell migration by deubiquitinating and stabilizing the epithelial-mesenchymal transition (EMT)-inducing transcription factor SNAI. Plays a role in the regulation of mitotic spindle assembly and mitotic progression by associating with chromatin-associated WAPL and stabilizing it through deubiquitination. The polypeptide is Ubiquitin carboxyl-terminal hydrolase 37 (USP37) (Bos taurus (Bovine)).